A 255-amino-acid chain; its full sequence is Putative SET domain-containing protein L678 (255 aa).

The SET domain maps to 5 to 176 (NRISEVFIKK…TGEELTDNYV (172 aa)). The tract at residues 235–255 (LQQNSKNLKKNPKKTIKATPK) is disordered.

This sequence belongs to the class V-like SAM-binding methyltransferase superfamily.

The sequence is that of Putative SET domain-containing protein L678 from Acanthamoeba polyphaga mimivirus (APMV).